The chain runs to 531 residues: Efflux pump terG (531 aa).

The segment covering 1-11 has biased composition (polar residues); the sequence is MSSSTLEGQET. The tract at residues 1-27 is disordered; that stretch reads MSSSTLEGQETASHHSKNSPSRHGDDG. A run of 13 helical transmembrane segments spans residues 86 to 106, 117 to 137, 145 to 165, 179 to 199, 207 to 227, 249 to 269, 280 to 300, 319 to 339, 351 to 371, 380 to 400, 402 to 422, 447 to 467, and 488 to 508; these read GKLS…ILIG, AIFV…GVSV, ILAR…ALAI, FAWF…FGPL, WIYW…IVAI, IDLL…FAWN, YVYV…YVEL, FVFG…FYVI, IQMA…ALIV, ASSI…LMAL, PVHS…TFAM, SVIM…AGTI, and TLWF…IFLL.

This sequence belongs to the major facilitator superfamily.

Its subcellular location is the cell membrane. Functionally, efflux pump that might be required for efficient secretion of terrein or other secondary metabolies produced by the terrein genne cluster. The protein is Efflux pump terG of Aspergillus terreus (strain NIH 2624 / FGSC A1156).